Here is a 349-residue protein sequence, read N- to C-terminus: SUMO-activating enzyme subunit 1 (349 aa).

Met1 carries the post-translational modification N-acetylmethionine. N-acetylvaline; in SUMO-activating enzyme subunit 1, N-terminally processed is present on Val2. Position 15 is a phosphoserine (Ser15). At Lys201 the chain carries N6-acetyllysine.

This sequence belongs to the ubiquitin-activating E1 family. In terms of assembly, heterodimer of SAE1 and UBA2/SAE2. The heterodimer corresponds to the two domains that are encoded on a single polypeptide chain in ubiquitin-activating enzyme E1. Interacts with UBE2I.

It localises to the nucleus. It functions in the pathway protein modification; protein sumoylation. The heterodimer acts as an E1 ligase for SUMO1, SUMO2, SUMO3, and probably SUMO4. It mediates ATP-dependent activation of SUMO proteins followed by formation of a thioester bond between a SUMO protein and a conserved active site cysteine residue on UBA2/SAE2. The polypeptide is SUMO-activating enzyme subunit 1 (Sae1) (Rattus norvegicus (Rat)).